The chain runs to 301 residues: Protoheme IX farnesyltransferase 2 (301 aa).

A run of 9 helical transmembrane segments spans residues 29–49 (VVAL…PTAV), 51–71 (VQPL…AAAL), 101–121 (ALIF…VLVN), 123–143 (LTAW…TAYL), 150–170 (NIVI…TAVT), 177–197 (ALLL…ALAI), 223–243 (CILL…LVGM), 244–264 (CGPM…YKAW), and 281–301 (FSIY…YLWS).

It belongs to the UbiA prenyltransferase family. Protoheme IX farnesyltransferase subfamily.

The protein resides in the cell inner membrane. The enzyme catalyses heme b + (2E,6E)-farnesyl diphosphate + H2O = Fe(II)-heme o + diphosphate. It functions in the pathway porphyrin-containing compound metabolism; heme O biosynthesis; heme O from protoheme: step 1/1. Converts heme B (protoheme IX) to heme O by substitution of the vinyl group on carbon 2 of heme B porphyrin ring with a hydroxyethyl farnesyl side group. This is Protoheme IX farnesyltransferase 2 from Shewanella sp. (strain W3-18-1).